The following is a 253-amino-acid chain: Patatin-like phospholipase domain-containing protein 4 (253 aa).

The region spanning 6 to 176 (LSFAACGFLG…TNALPILPVG (171 aa)) is the PNPLA domain. Positions 41 to 45 (GASAG) match the GXSXG motif. The active-site Nucleophile is S43. D163 serves as the catalytic Proton acceptor. Positions 163-165 (DGG) match the DGA/G motif.

Expressed in all tissues examined, including heart, brain, placenta, lung, liver, muscle, kidney, pancreas and spleen.

It localises to the mitochondrion. It carries out the reaction a triacylglycerol + H2O = a diacylglycerol + a fatty acid + H(+). It catalyses the reaction a 1,2-diacyl-sn-glycero-3-phosphocholine + H2O = a 1-acyl-sn-glycero-3-phosphocholine + a fatty acid + H(+). The catalysed reaction is an all-trans-retinyl ester + H2O = all-trans-retinol + a fatty acid + H(+). The enzyme catalyses 2 a 1-acylglycerol = a 1,2-diacylglycerol + glycerol. It carries out the reaction a 1-acylglycerol + a 1,2-diacylglycerol = a triacylglycerol + glycerol. It catalyses the reaction a 1-acylglycerol + a 1,3-diacylglycerol = a triacylglycerol + glycerol. The catalysed reaction is a triacylglycerol + H2O = a 1,2-diacylglycerol + a fatty acid + H(+). The enzyme catalyses a triacylglycerol + H2O = a 1,3-diacylglycerol + a fatty acid + H(+). It carries out the reaction a triacylglycerol + all-trans-retinol = an all-trans-retinyl ester + a diacylglycerol. It catalyses the reaction 2 1-(9Z-octadecenoyl)-glycerol = 1,2-di-(9Z-octadecenoyl)-glycerol + glycerol. The catalysed reaction is 1-(9Z-octadecenoyl)-glycerol + 1,2-di-(9Z-octadecenoyl)-glycerol = 1,2,3-tri-(9Z-octadecenoyl)-glycerol + glycerol. The enzyme catalyses 1-(9Z-octadecenoyl)-glycerol + 1,3-di-(9Z-octadecenoyl)-glycerol = 1,2,3-tri-(9Z-octadecenoyl)-glycerol + glycerol. It carries out the reaction 1,2-di-(9Z-octadecenoyl)-glycerol + (9Z)-octadecenoate + H(+) = 1,2,3-tri-(9Z-octadecenoyl)-glycerol + H2O. It catalyses the reaction 1,2,3-tri-(9Z-octadecenoyl)-glycerol + H2O = 1,3-di-(9Z-octadecenoyl)-glycerol + (9Z)-octadecenoate + H(+). The catalysed reaction is all-trans-retinyl hexadecanoate + H2O = all-trans-retinol + hexadecanoate + H(+). The enzyme catalyses 1,2,3-tri-(9Z-octadecenoyl)-glycerol + all-trans-retinol = all-trans-retinyl 9Z-octadecenoate + di-(9Z)-octadecenoylglycerol. The triglyceride lipase activity is inhibited by BEL ((E)-6-(bromomethylene)-3-(1-naphthalenyl)-2H-tetrahydropyran-2-one), a suicide substrate inhibitor. Functionally, has abundant triacylglycerol lipase activity. Transfers fatty acid from triglyceride to retinol, hydrolyzes retinylesters, and generates 1,3-diacylglycerol from triglycerides. Additionally possesses acylglycerol transacylase and phospholipase A2 activities. This chain is Patatin-like phospholipase domain-containing protein 4, found in Homo sapiens (Human).